We begin with the raw amino-acid sequence, 882 residues long: DNA mismatch repair protein MutS (882 aa).

ATP is bound at residue 626-633 (GPNMAGKS).

The protein belongs to the DNA mismatch repair MutS family.

In terms of biological role, this protein is involved in the repair of mismatches in DNA. It is possible that it carries out the mismatch recognition step. This protein has a weak ATPase activity. The polypeptide is DNA mismatch repair protein MutS (Anaeromyxobacter sp. (strain Fw109-5)).